The primary structure comprises 90 residues: MAFVRSLLGAKKILSRSTGAGSAAPKGFLAVYVGESQKKRYLVPVSYLNQPSFQALLSKSEEEFGFDHPMGGLTIPCPEDTFINVTSRLQ.

The protein belongs to the ARG7 family.

It is found in the cell membrane. Functions as a positive effector of cell expansion through modulation of auxin transport. This Arabidopsis thaliana (Mouse-ear cress) protein is Auxin-responsive protein SAUR24.